We begin with the raw amino-acid sequence, 419 residues long: Dimethylallyltryptophan synthase 1 (419 aa).

Positions 81, 82, and 90 each coordinate L-tryptophan. Residue phenylalanine 81 coordinates L-tyrosine. Residues arginine 105, lysine 187, tyrosine 189, arginine 251, lysine 253, and tyrosine 255 each contribute to the (2E)-geranyl diphosphate site. Dimethylallyl diphosphate is bound by residues arginine 105, lysine 187, tyrosine 189, arginine 251, lysine 253, and tyrosine 255. Arginine 257 lines the L-tryptophan pocket. L-tyrosine is bound at residue arginine 257. (2E)-geranyl diphosphate contacts are provided by lysine 332 and tyrosine 334. Residues lysine 332 and tyrosine 334 each contribute to the dimethylallyl diphosphate site. Residue tyrosine 389 participates in L-tryptophan binding. Residue tyrosine 389 participates in L-tyrosine binding. Position 404 (tyrosine 404) interacts with (2E)-geranyl diphosphate.

It belongs to the tryptophan dimethylallyltransferase family.

It carries out the reaction L-tyrosine + dimethylallyl diphosphate = 4-O-dimethylallyl-L-tyrosine + diphosphate. In terms of biological role, dimethylallyltryptophan synthase; part of the DMATS1 gene cluster that mediates the biosynthesis of a reversely N-prenylated monomeric L-tryptophan (r-N-DMAT). DMATS1 catalyzes the reverse N-prenylation of L-Trp with DMAPP to yield N-dimethylallyl-L-tryptophan. DMATS1 exhibits unusually broad substrate specificity and can utilize geranyl diphosphate (GPP) or L-Tyr as an alternative prenyl donor or acceptor, respectively. Is able to catalyze both forward and reverse prenylation, i.e., at C1 or C3 of DMAPP; and it can catalyze C-N and C-O bond-forming reactions. The main product of the cluster is the reverse-N-dimethylallyl-L-tryptophan (r-N-DMAT) produced by the dimethylallyltryptophan synthase DMATS1 and it remains unclear whether this metabolite undergoes further modifications when silent gene clusters are activated. The acetylated form of r-N-DMAT, ac-r-N-DMAT, is also produced. The roles of the cytochrome P450 monooxygenase FFUJ_09176 and the methyltransferase FFUJ_09178 have still to be elucidated. The chain is Dimethylallyltryptophan synthase 1 from Gibberella fujikuroi (strain CBS 195.34 / IMI 58289 / NRRL A-6831) (Bakanae and foot rot disease fungus).